The sequence spans 1014 residues: Chondroitin sulfate ABC exolyase (1014 aa).

Residues 1–14 (MLILSFLCPAFLNA) form the signal peptide. Residues Ser24, Glu26, Asp50, His53, and Asp161 each coordinate Ca(2+). Residues His345 and His454 each act as proton acceptor in the active site. Tyr461 (proton donor) is an active-site residue.

The protein belongs to the polysaccharide lyase 8 family. As to quaternary structure, monomer. Ca(2+) is required as a cofactor. Mg(2+) serves as cofactor.

It is found in the periplasm. It carries out the reaction Exolytic removal of Delta(4)-unsaturated disaccharide residues from the non-reducing ends of both polymeric chondroitin/dermatan sulfates and their oligosaccharide fragments.. With respect to regulation, specific activity for chondroitin sulfate substrates increases moderately (2-fold) while an increase of 25-fold is observed for dermatan sulfate as substrate upon addition of Ca(2+) or Mg(2+) ions. Increasing the concentration of Na(+), K(+) or Cs(+) chloride from 0 to 0.1 M, increases the activity against all substrates. Further increases in salt concentration reduces the activity dramatically, with 50% inhibition occurring at 0.15 M and nearly complete inhibition at 0.4 M salt. The addition of 10 mM Ca(2+) or Mg(2+) ions increases the activity against chondroitin 4- and 6-sulfates by 2-3-fold, while the activity against dermatan sulfate increases much more significantly by 50-fold. Addition of Mn(2+) and Zn(2+) reduces activity against chondroitin sulfate substrates, but increases the activity against dermatan sulfate. Increasing the concentration of CaCl(2) with both chondroitin 4- and 6-sulfates from 0 to 0.04 M increases the activity. A further increase reduces activity, with 50% inhibition at 0.065-0.085 M and a complete inhibition of the reaction at 0.2 M. In case of dermatan sulfate, the addition of low concentration of CaCl(2) dramatically increases the activity from the basal level. The maximal activity is reached at 0.01 M CaCl(2). In terms of biological role, broad-specificity glycosaminoglycan lyase, which acts in an exolytic fashion degrading chondroitin sulfates and dermatan sulfate to yield only disaccharide products. Has a preference for chondroitin 4-sulfate over chondroitin 6-sulfate. Has extremely low activity against hyaluronic acid. Is not active against acharan sulfate, heparin or heparan sulfate. The protein is Chondroitin sulfate ABC exolyase (chonabc) of Bacteroides thetaiotaomicron.